The following is a 679-amino-acid chain: Protein CASP (679 aa).

Residues Met1 to Met614 are Cytoplasmic-facing. Coiled coils occupy residues Ala14–Leu90 and Arg178–Asp341. Ser364 carries the phosphoserine modification. Residues Ala385–His444 are a coiled coil. Residues Ser450 and Ser453 each carry the phosphoserine modification. Residues Ile492–Arg540 are a coiled coil. Ser555 bears the Phosphoserine mark. A helical; Anchor for type IV membrane protein transmembrane segment spans residues Val615–Ile635. The Lumenal portion of the chain corresponds to Asn636–Arg679.

It belongs to the CASP family.

It is found in the golgi apparatus membrane. In terms of biological role, may be involved in intra-Golgi transport. The polypeptide is Protein CASP (COY1) (Saccharomyces cerevisiae (strain ATCC 204508 / S288c) (Baker's yeast)).